The sequence spans 84 residues: Small ribosomal subunit protein bS16 (84 aa).

It belongs to the bacterial ribosomal protein bS16 family.

This chain is Small ribosomal subunit protein bS16, found in Paraburkholderia phymatum (strain DSM 17167 / CIP 108236 / LMG 21445 / STM815) (Burkholderia phymatum).